A 209-amino-acid polypeptide reads, in one-letter code: 3-demethoxyubiquinol 3-hydroxylase (209 aa).

Residues E58, E88, H91, E140, E172, and H175 each contribute to the Fe cation site.

Belongs to the COQ7 family. Fe cation is required as a cofactor.

The protein localises to the cell membrane. The enzyme catalyses a 5-methoxy-2-methyl-3-(all-trans-polyprenyl)benzene-1,4-diol + AH2 + O2 = a 3-demethylubiquinol + A + H2O. It participates in cofactor biosynthesis; ubiquinone biosynthesis. Functionally, catalyzes the hydroxylation of 2-nonaprenyl-3-methyl-6-methoxy-1,4-benzoquinol during ubiquinone biosynthesis. This chain is 3-demethoxyubiquinol 3-hydroxylase, found in Polynucleobacter necessarius subsp. necessarius (strain STIR1).